Here is a 582-residue protein sequence, read N- to C-terminus: PCNA-interacting partner (582 aa).

Composition is skewed to polar residues over residues 471–487 (GVNS…SSGN) and 501–510 (KSSSLTGNTS). Residues 471-514 (GVNSSVGRPTIGTSSGNVHLGRSEKEKVARKSSSLTGNTSSKRK) form a disordered region.

This sequence belongs to the PARI family. In terms of assembly, interacts with RAD51 and PCNA. Interacts with PARP1. Interacts with TASOR.

It is found in the cytoplasm. The protein localises to the nucleus. Functionally, required to suppress inappropriate homologous recombination, thereby playing a central role DNA repair and in the maintenance of genomic stability. Antagonizes homologous recombination by interfering with the formation of the RAD51-DNA homologous recombination structure. Binds single-strand DNA and poly(A) homopolymers. Positively regulate the poly(ADP-ribosyl)ation activity of PARP1; however such function may be indirect. The protein is PCNA-interacting partner (PARPBP) of Bos taurus (Bovine).